Reading from the N-terminus, the 134-residue chain is Syncollin (134 aa).

The first 21 residues, 1–21 (MSPLRPLLLALALASVPCAQG), serve as a signal peptide directing secretion.

Monomer and homooligomer; most probably hexameric. Interacts with GP2. In terms of processing, contains intrachain disulfide bonds.

Its subcellular location is the zymogen granule membrane. The protein localises to the zymogen granule lumen. Functionally, functions in exocytosis in pancreatic acinar cells regulating the fusion of zymogen granules with each other. May have a pore-forming activity on membranes and regulate exocytosis in other exocrine tissues. The chain is Syncollin (SYCN) from Homo sapiens (Human).